Here is a 273-residue protein sequence, read N- to C-terminus: 4-hydroxy-tetrahydrodipicolinate reductase (273 aa).

NAD(+) is bound by residues 8 to 13 (GCAGNM), Glu-34, 102 to 104 (GTT), and 128 to 131 (SPNM). The active-site Proton donor/acceptor is His-161. His-162 contacts (S)-2,3,4,5-tetrahydrodipicolinate. Residue Lys-165 is the Proton donor of the active site. Residue 171–172 (GT) participates in (S)-2,3,4,5-tetrahydrodipicolinate binding.

This sequence belongs to the DapB family.

The protein resides in the cytoplasm. The catalysed reaction is (S)-2,3,4,5-tetrahydrodipicolinate + NAD(+) + H2O = (2S,4S)-4-hydroxy-2,3,4,5-tetrahydrodipicolinate + NADH + H(+). It carries out the reaction (S)-2,3,4,5-tetrahydrodipicolinate + NADP(+) + H2O = (2S,4S)-4-hydroxy-2,3,4,5-tetrahydrodipicolinate + NADPH + H(+). Its pathway is amino-acid biosynthesis; L-lysine biosynthesis via DAP pathway; (S)-tetrahydrodipicolinate from L-aspartate: step 4/4. Functionally, catalyzes the conversion of 4-hydroxy-tetrahydrodipicolinate (HTPA) to tetrahydrodipicolinate. This Methanosphaera stadtmanae (strain ATCC 43021 / DSM 3091 / JCM 11832 / MCB-3) protein is 4-hydroxy-tetrahydrodipicolinate reductase.